The primary structure comprises 471 residues: Uronate isomerase (471 aa).

This sequence belongs to the metallo-dependent hydrolases superfamily. Uronate isomerase family.

The catalysed reaction is D-glucuronate = D-fructuronate. It catalyses the reaction aldehydo-D-galacturonate = keto-D-tagaturonate. Its pathway is carbohydrate metabolism; pentose and glucuronate interconversion. The polypeptide is Uronate isomerase (Latilactobacillus sakei subsp. sakei (strain 23K) (Lactobacillus sakei subsp. sakei)).